The sequence spans 21 residues: Misgurin (21 aa).

The interval 1–21 is disordered; that stretch reads RQRVEELSKFSKKGAAARRRK. The segment covering 10–21 has biased composition (basic residues); it reads FSKKGAAARRRK.

Its subcellular location is the secreted. Strong antimicrobial activity against several Gram-positive and Gram-negative bacteria and fungi. The protein is Misgurin of Misgurnus anguillicaudatus (Oriental weatherloach).